Here is a 363-residue protein sequence, read N- to C-terminus: Heme A synthase (363 aa).

8 helical membrane-spanning segments follow: residues Ala21–Gly41, Arg107–Ser127, Leu138–Ser158, His174–Pro194, Leu207–Gly227, Phe268–Thr288, Ala301–Met321, and Val323–Ala343. Residue His270 participates in heme binding. His331 is a heme binding site.

Belongs to the COX15/CtaA family. Type 2 subfamily. In terms of assembly, interacts with CtaB. Heme b is required as a cofactor.

Its subcellular location is the cell membrane. The enzyme catalyses Fe(II)-heme o + 2 A + H2O = Fe(II)-heme a + 2 AH2. It functions in the pathway porphyrin-containing compound metabolism; heme A biosynthesis; heme A from heme O: step 1/1. Functionally, catalyzes the conversion of heme O to heme A by two successive hydroxylations of the methyl group at C8. The first hydroxylation forms heme I, the second hydroxylation results in an unstable dihydroxymethyl group, which spontaneously dehydrates, resulting in the formyl group of heme A. The polypeptide is Heme A synthase (Mesorhizobium japonicum (strain LMG 29417 / CECT 9101 / MAFF 303099) (Mesorhizobium loti (strain MAFF 303099))).